The primary structure comprises 360 residues: Putative F-box protein At3g16210 (360 aa).

In terms of domain architecture, F-box spans 1-48 (MSKFLPEELAIEILVRLSMKDLARFRCVCKTWRDLINDPGFTETYRDM).

In Arabidopsis thaliana (Mouse-ear cress), this protein is Putative F-box protein At3g16210.